The following is a 686-amino-acid chain: MGASQSTSGIEGASSPEQLSVLLAERFATKCFTPLELTHFKDNFYSRALDQAGFRYWNEKILSDFLSVPDGIYTNEKDGGHDGRLDAGPVVFRMVSYLGAFPFQKTLAPSVLTFDSMVKVVVLLTERYGKVLRRGRKDRVKLLFGSLADVGRSLEQDTKKQNDSAESASKSEDSKQSSHVHGFSVDEPTNDDYEEHEDDDDLALAALESLDAIEVFKHDQQIDRAVCEARISIDTFRRLLMLLLAIAPLRPLESVNKYTFNLSSEEQAAVKREADTIIASFTEEEIRDGIGYKTFAKTVTLSLPHLFDPLTPLFEHLLFSENLDLSRKQTGQSEPSPESPPSEAPTDANIDEKPTTIMLPGSFESAILTPSMVSHLSFFLPASSGQNLYRSDIRLHPVFSTVAHGESLTSFQHNVFTWQAPSLLIVQGALPGSSGSPDELITLGAYIPQPWKPSSSSSYESPQNLNNRSRLPYLFQLHPKHSVLPGNSSLLQTKEQPSTTPIVYFSTTTGIAIGCEVPASAQQHRTSYGPGVPSPHQQPHRRQSSTNHKQQQGPLPHGAGSLIIDAALETAQLHISYLAAHTGVFTPAVPPTLPTITHIDIYNLEIWGIIEPPSLSLLPDSAGIAKDAISRQREAWQFDAREAERRKGINVKLGSGNDSNYQNAKALLEMAGIIGDQAQQRSGGSV.

The span at 155 to 176 shows a compositional bias: basic and acidic residues; it reads EQDTKKQNDSAESASKSEDSKQ. Disordered stretches follow at residues 155–198, 326–355, and 522–559; these read EQDT…EHED, SRKQTGQSEPSPESPPSEAPTDANIDEKPT, and QQHRTSYGPGVPSPHQQPHRRQSSTNHKQQQGPLPHGA. Residues 188–198 are compositionally biased toward acidic residues; sequence PTNDDYEEHED. Residues 366-610 enclose the TLDc domain; that stretch reads AILTPSMVSH…IYNLEIWGII (245 aa). Residues 544–553 are compositionally biased toward polar residues; it reads SSTNHKQQQG.

It belongs to the RTC5 family.

It localises to the cytoplasm. Functionally, may be involved in a process influencing telomere capping. The sequence is that of Restriction of telomere capping protein 5 (rtc5) from Talaromyces stipitatus (strain ATCC 10500 / CBS 375.48 / QM 6759 / NRRL 1006) (Penicillium stipitatum).